A 190-amino-acid chain; its full sequence is Potassium-transporting ATPase KdpC subunit (190 aa).

The helical transmembrane segment at 15-35 (LWILTALIYPAIVLVIGQLVF) threads the bilayer.

Belongs to the KdpC family. The system is composed of three essential subunits: KdpA, KdpB and KdpC.

Its subcellular location is the cell inner membrane. Functionally, part of the high-affinity ATP-driven potassium transport (or Kdp) system, which catalyzes the hydrolysis of ATP coupled with the electrogenic transport of potassium into the cytoplasm. This subunit acts as a catalytic chaperone that increases the ATP-binding affinity of the ATP-hydrolyzing subunit KdpB by the formation of a transient KdpB/KdpC/ATP ternary complex. In Synechocystis sp. (strain ATCC 27184 / PCC 6803 / Kazusa), this protein is Potassium-transporting ATPase KdpC subunit.